Reading from the N-terminus, the 150-residue chain is Phosphoribosyl-AMP cyclohydrolase (150 aa).

Residue D92 participates in Mg(2+) binding. C93 lines the Zn(2+) pocket. Residues D94 and D96 each coordinate Mg(2+). Zn(2+) contacts are provided by C111 and C118.

The protein belongs to the PRA-CH family. In terms of assembly, homodimer. The cofactor is Mg(2+). Requires Zn(2+) as cofactor.

Its subcellular location is the cytoplasm. The catalysed reaction is 1-(5-phospho-beta-D-ribosyl)-5'-AMP + H2O = 1-(5-phospho-beta-D-ribosyl)-5-[(5-phospho-beta-D-ribosylamino)methylideneamino]imidazole-4-carboxamide. Its pathway is amino-acid biosynthesis; L-histidine biosynthesis; L-histidine from 5-phospho-alpha-D-ribose 1-diphosphate: step 3/9. In terms of biological role, catalyzes the hydrolysis of the adenine ring of phosphoribosyl-AMP. The sequence is that of Phosphoribosyl-AMP cyclohydrolase from Agrobacterium fabrum (strain C58 / ATCC 33970) (Agrobacterium tumefaciens (strain C58)).